Here is a 534-residue protein sequence, read N- to C-terminus: MAREQLQVLNALDVAKTQWYHFTAIIIAGMGFFTDAYDLFCISLVTKLLGRIYYHVEGAQKPGTLPPNVAAAVNGVAFCGTLAGQLFFGWLGDKLGRKKVYGMTLMVMVLCSIASGLSFGHEPKAVMATLCFFRFWLGFGIGGDYPLSATIMSEYANKKTRGAFVSAVFAMQGFGIMAGGIFAIIISSAFEAKFPSPAYADDALGSTIPQADLVWRIILMAGAIPAAMTYYSRSKMPETARYTALVAKDAKQAASDMSKVLQVEIEPEQQKLEEISKEKSKAFGLFSKEFMSRHGLHLLGTTSTWFLLDIAFYSQNLFQKDIFSAIGWIPPAQSMNAIQEVFKIARAQTLIALCSTVPGYWFTVAFIDVIGRFAIQMMGFFFMTVFMFALAIPYNHWTHKENRIGFVIMYSLTFFFANFGPNATTFVVPAEIFPARFRSTCHGISAASGKLGAMVGAFGFLYLAQNPDKDKTDAGYPPGIGVRNSLIVLGVVNFLGILFTFLVPESKGKSLEEMSGENEDNENSNNDSRTVPIV.

The Cytoplasmic portion of the chain corresponds to 1 to 24; that stretch reads MAREQLQVLNALDVAKTQWYHFTA. Residues 25-45 form a helical membrane-spanning segment; the sequence is IIIAGMGFFTDAYDLFCISLV. Topologically, residues 46–70 are extracellular; it reads TKLLGRIYYHVEGAQKPGTLPPNVA. Residues 71 to 91 traverse the membrane as a helical segment; it reads AAVNGVAFCGTLAGQLFFGWL. The Cytoplasmic portion of the chain corresponds to 92–99; the sequence is GDKLGRKK. Residues 100–120 form a helical membrane-spanning segment; the sequence is VYGMTLMVMVLCSIASGLSFG. The Extracellular portion of the chain corresponds to 121-131; that stretch reads HEPKAVMATLC. The helical transmembrane segment at 132–152 threads the bilayer; it reads FFRFWLGFGIGGDYPLSATIM. Topologically, residues 153 to 161 are cytoplasmic; sequence SEYANKKTR. The helical transmembrane segment at 162 to 182 threads the bilayer; sequence GAFVSAVFAMQGFGIMAGGIF. At 183–211 the chain is on the extracellular side; it reads AIIISSAFEAKFPSPAYADDALGSTIPQA. Residues 212–232 form a helical membrane-spanning segment; it reads DLVWRIILMAGAIPAAMTYYS. Residues 233 to 293 are Cytoplasmic-facing; sequence RSKMPETARY…GLFSKEFMSR (61 aa). A helical membrane pass occupies residues 294–314; that stretch reads HGLHLLGTTSTWFLLDIAFYS. Residues 315 to 349 lie on the Extracellular side of the membrane; the sequence is QNLFQKDIFSAIGWIPPAQSMNAIQEVFKIARAQT. Residues 350–370 form a helical membrane-spanning segment; that stretch reads LIALCSTVPGYWFTVAFIDVI. Residues 371–372 lie on the Cytoplasmic side of the membrane; that stretch reads GR. Residues 373 to 393 traverse the membrane as a helical segment; the sequence is FAIQMMGFFFMTVFMFALAIP. Over 394-403 the chain is Extracellular; it reads YNHWTHKENR. The chain crosses the membrane as a helical span at residues 404–424; sequence IGFVIMYSLTFFFANFGPNAT. Topologically, residues 425 to 442 are cytoplasmic; that stretch reads TFVVPAEIFPARFRSTCH. A helical membrane pass occupies residues 443–463; the sequence is GISAASGKLGAMVGAFGFLYL. The Extracellular portion of the chain corresponds to 464–484; it reads AQNPDKDKTDAGYPPGIGVRN. Residues 485 to 505 form a helical membrane-spanning segment; the sequence is SLIVLGVVNFLGILFTFLVPE. Residues 506-534 are Cytoplasmic-facing; that stretch reads SKGKSLEEMSGENEDNENSNNDSRTVPIV. Positions 512 to 534 are disordered; it reads EEMSGENEDNENSNNDSRTVPIV. 2 positions are modified to phosphoserine: serine 524 and serine 528.

The protein belongs to the major facilitator superfamily. Phosphate:H(+) symporter (TC 2.A.1.9) family. Interacts with NLA. Post-translationally, ubiquitinated by NLA. Ubiquitination of PHT1-4 leads to its degradation by the proteasome. Mostly expressed in roots, in tissues connecting the lateral roots to the primary root. Also present in flowers, in senescing anther filaments and in the abscission zone at the base of siliques. Expressed in hydathodes and axillary buds, and in some senescing leaves. After Pi starvation, localized in all cells of undifferentiated root segments, including root tips and root hairs, and in the epidermis, cortex and stellar regions of mature root segments.

The protein resides in the cell membrane. Functionally, high-affinity transporter for external inorganic phosphate. Acts as a H(+):phosphate symporter in both low- and high-Pi conditions. Confers sensitivity to arsenate. The sequence is that of Inorganic phosphate transporter 1-4 (PHT1-4) from Arabidopsis thaliana (Mouse-ear cress).